Consider the following 72-residue polypeptide: Putative ORF1 protein (72 aa).

The chain is Putative ORF1 protein (ORF1) from Leishmania RNA virus 1 - 1 (isolate Leishmania guyanensis) (LRV-1-1).